The chain runs to 492 residues: Bifunctional purine biosynthesis protein PurH (492 aa).

The 144-residue stretch at 1 to 144 (MKKAILSVSN…KNYKHVTTIV (144 aa)) folds into the MGS-like domain.

It belongs to the PurH family.

The catalysed reaction is (6R)-10-formyltetrahydrofolate + 5-amino-1-(5-phospho-beta-D-ribosyl)imidazole-4-carboxamide = 5-formamido-1-(5-phospho-D-ribosyl)imidazole-4-carboxamide + (6S)-5,6,7,8-tetrahydrofolate. The enzyme catalyses IMP + H2O = 5-formamido-1-(5-phospho-D-ribosyl)imidazole-4-carboxamide. Its pathway is purine metabolism; IMP biosynthesis via de novo pathway; 5-formamido-1-(5-phospho-D-ribosyl)imidazole-4-carboxamide from 5-amino-1-(5-phospho-D-ribosyl)imidazole-4-carboxamide (10-formyl THF route): step 1/1. The protein operates within purine metabolism; IMP biosynthesis via de novo pathway; IMP from 5-formamido-1-(5-phospho-D-ribosyl)imidazole-4-carboxamide: step 1/1. The polypeptide is Bifunctional purine biosynthesis protein PurH (Staphylococcus aureus (strain USA300)).